The chain runs to 509 residues: DAP3-binding cell death enhancer 1 (509 aa).

The N-terminal 23 residues, 1 to 23, are a transit peptide targeting the mitochondrion; that stretch reads MWRLTGILGRALPRLLGPGFRGI. 2 disordered regions span residues 19–60 and 143–185; these read GFRG…RNRD and VLPS…PGLL. Positions 24–101 are cleaved as a propeptide — extended MTS; sequence TPKPTSSDGP…AVLALHLARQ (78 aa). Residues 26–40 show a composition bias toward polar residues; the sequence is KPTSSDGPQTTSTTL. Composition is skewed to basic and acidic residues over residues 46–60 and 156–168; these read NFDRSGSHGSKRNRD and GLREPRLGQEEPA. TPR repeat units follow at residues 213 to 245, 246 to 278, 279 to 313, 314 to 351, 352 to 385, 386 to 423, and 470 to 498; these read AGPPGGKNEQDKPKALPLEEAVTSIQQLFQLSV, AIAFNFLGTENIKTGDYTAAFSYFQKAADRGYS, KAQYNVGLCLEHGRGTPRDLSKAVLFYHLAAVQGH, SLAQYRYARCLLQSPGSMSDPERQRAVSLLKQAADSGL, TEAQAFLGVLFTKEPHLDEQKAVKYFWLAASNGD, SQSRFHLGICYEKGLGVQRNLGEAVKCYQKSAAMGNEP, and ASSTGNLGLLCRSGHLGTSHGAPSRAMPS. The SIFI-degron motif lies at 307 to 326; that stretch reads LAAVQGHSLAQYRYARCLLQ.

Belongs to the DELE1 family. As to quaternary structure, interacts with DAP3. Interacts (via TPR repeats) with EIF2AK1/HRI; activating the protein kinase activity of EIF2AK1/HRI, thereby promoting the integrated stress response (ISR). In terms of assembly, homooctamer; oligomerization is required to activate EIF2AK1/HRI. Interacts (via TPR repeats) with EIF2AK1/HRI; activating the protein kinase activity of EIF2AK1/HRI, thereby promoting the integrated stress response (ISR). In terms of processing, unstable protein in absence of stress: imported in the mitochondrial matrix following processing by the mitochondrial-processing peptidase (MPP), where it is degraded by LONP1. Stabilized in response to iron deficiency: iron deficiency impairs mitochondrial import, promoting localization at the mitochondrial surface and stabilization. Cleaved by OMA1 in response to mitochondrial stress, generating the DAP3-binding cell death enhancer 1 short form (DELE1(S) or S-DELE1) that accumulates in the cytosol and activates the protein kinase activity of EIF2AK1/HRI. Protein cleavage by OMA1 can take place at different positions, and apparently does not require a specific sequence motif. Ubiquitinated and degraded by the SIFI complex once the mitochondrial stress has been resolved, thereby providing stress response silencing. Within the SIFI complex, UBR4 initiates ubiquitin chain that are further elongated or branched by KCMF1.

Its subcellular location is the mitochondrion. It is found in the mitochondrion outer membrane. The protein localises to the mitochondrion inner membrane. It localises to the cytoplasm. The protein resides in the cytosol. Functionally, protein kinase activator that acts as a key activator of the integrated stress response (ISR) following various stresses, such as iron deficiency, mitochondrial stress or mitochondrial DNA breaks. Detects impaired protein import and processing in mitochondria, activating the ISR. May also required for the induction of death receptor-mediated apoptosis through the regulation of caspase activation. Protein kinase activator that activates the ISR in response to iron deficiency: iron deficiency impairs mitochondrial import, promoting DELE1 localization at the mitochondrial surface, where it binds and activates EIF2AK1/HRI to trigger the ISR. In terms of biological role, protein kinase activator generated by protein cleavage in response to mitochondrial stress, which accumulates in the cytosol and specifically binds to and activates the protein kinase activity of EIF2AK1/HRI. It thereby activates the integrated stress response (ISR): EIF2AK1/HRI activation promotes eIF-2-alpha (EIF2S1) phosphorylation, leading to a decrease in global protein synthesis and the induction of selected genes, including the transcription factor ATF4, the master transcriptional regulator of the ISR. Also acts as an activator of PRKN-independent mitophagy: activates the protein kinase activity of EIF2AK1/HRI in response to mitochondrial damage, promoting eIF-2-alpha (EIF2S1) phosphorylation, leading to mitochondrial localization of EIF2S1 followed by induction of mitophagy. The polypeptide is DAP3-binding cell death enhancer 1 (Rattus norvegicus (Rat)).